The sequence spans 98 residues: UPF0175 protein VNG_0066H (98 aa).

Belongs to the UPF0175 family.

In Halobacterium salinarum (strain ATCC 700922 / JCM 11081 / NRC-1) (Halobacterium halobium), this protein is UPF0175 protein VNG_0066H.